The following is a 121-amino-acid chain: Acid shock protein (121 aa).

Residues 1–21 (MKKVLALMVAATLGLSSVAFA) form the signal peptide. A propeptide spanning residues 22–63 (ADTTATATPAATSTTATVAAQTKATQHQKHKVTKKTTEQKAQ) is cleaved from the precursor. The tract at residues 40–121 (AAQTKATQHQ…AKKPVAAPAA (82 aa)) is disordered. Basic residues predominate over residues 84 to 93 (AAKKHVKKAS). Low complexity predominate over residues 94–103 (VQKAPVQKAQ). The segment covering 104-113 (AAKKHHKTAK) has biased composition (basic residues).

Belongs to the Asr family. Proteolytic processing gives rise to the active protein.

The protein localises to the periplasm. Its function is as follows. Required for growth and/or survival at acidic conditions. This is Acid shock protein from Yersinia pestis bv. Antiqua (strain Antiqua).